The following is a 317-amino-acid chain: Protoheme IX farnesyltransferase (317 aa).

The next 8 membrane-spanning stretches (helical) occupy residues 25–45, 54–74, 126–146, 154–174, 181–201, 227–244, 249–271, and 281–301; these read FFAL…LVGM, PVIA…SGCL, LAAG…SMWL, IVIG…VVTG, LVLF…LALV, IVAY…PVAL, LIYG…QVYH, and AAMG…SALL.

Belongs to the UbiA prenyltransferase family. Protoheme IX farnesyltransferase subfamily.

It localises to the cell inner membrane. It catalyses the reaction heme b + (2E,6E)-farnesyl diphosphate + H2O = Fe(II)-heme o + diphosphate. The protein operates within porphyrin-containing compound metabolism; heme O biosynthesis; heme O from protoheme: step 1/1. Functionally, converts heme B (protoheme IX) to heme O by substitution of the vinyl group on carbon 2 of heme B porphyrin ring with a hydroxyethyl farnesyl side group. The sequence is that of Protoheme IX farnesyltransferase from Methylobacterium sp. (strain 4-46).